We begin with the raw amino-acid sequence, 88 residues long: Elongation factor 1-beta (88 aa).

The protein belongs to the EF-1-beta/EF-1-delta family.

Functionally, promotes the exchange of GDP for GTP in EF-1-alpha/GDP, thus allowing the regeneration of EF-1-alpha/GTP that could then be used to form the ternary complex EF-1-alpha/GTP/AAtRNA. The protein is Elongation factor 1-beta of Methanosphaera stadtmanae (strain ATCC 43021 / DSM 3091 / JCM 11832 / MCB-3).